Here is a 187-residue protein sequence, read N- to C-terminus: Aminodeoxychorismate synthase component 2 (187 aa).

The region spanning 1 to 187 is the Glutamine amidotransferase type-1 domain; sequence MILLIDNYDS…HQLLANFLNR (187 aa). Active-site residues include Cys79, His168, and Glu170.

As to quaternary structure, monomer. Heterodimer consisting of two non-identical subunits: a glutamine amidotransferase subunit (PabA) and a aminodeoxychorismate synthase subunit (PabB).

The catalysed reaction is chorismate + L-glutamine = 4-amino-4-deoxychorismate + L-glutamate. It participates in cofactor biosynthesis; tetrahydrofolate biosynthesis; 4-aminobenzoate from chorismate: step 1/2. In terms of biological role, part of a heterodimeric complex that catalyzes the two-step biosynthesis of 4-amino-4-deoxychorismate (ADC), a precursor of p-aminobenzoate (PABA) and tetrahydrofolate. In the first step, a glutamine amidotransferase (PabA) generates ammonia as a substrate that, along with chorismate, is used in the second step, catalyzed by aminodeoxychorismate synthase (PabB) to produce ADC. PabA converts glutamine into glutamate only in the presence of stoichiometric amounts of PabB. The chain is Aminodeoxychorismate synthase component 2 (pabA) from Klebsiella aerogenes (Enterobacter aerogenes).